The chain runs to 611 residues: Actin-binding LIM protein 2 (611 aa).

LIM zinc-binding domains are found at residues 22–81, 81–141, 151–210, and 210–270; these read ILCN…LYGT, TRCF…VSVG, RSCG…KFGI, and IRCD…ARTE. The Zn(2+) site is built by Cys-83, Cys-86, His-103, Cys-106, Cys-109, Cys-112, Cys-131, and Cys-134. Residues Cys-212, Cys-215, His-232, Cys-235, Cys-238, Cys-241, His-260, and Cys-263 each contribute to the Zn(2+) site. Basic and acidic residues predominate over residues 269–278; it reads TEDRNKETRT. Disordered regions lie at residues 269–295 and 336–527; these read TEDR…SGSP and YISH…DQRN. 2 stretches are compositionally biased toward low complexity: residues 279 to 295 and 363 to 372; these read SSES…SGSP and SSPSSTGSVS. Phosphoserine occurs at positions 282, 294, 364, and 367. Polar residues predominate over residues 393–404; the sequence is SGRSTPSLSVLS. Ser-452 is subject to Phosphoserine. Thr-472 carries the post-translational modification Phosphothreonine. The segment covering 473–488 has biased composition (polar residues); that stretch reads RTNSPDLDTQSLSHSS. 2 positions are modified to phosphoserine: Ser-476 and Ser-578. The 69-residue stretch at 543 to 611 folds into the HP domain; that stretch reads MREYKIYPYD…NDLKKKALLF (69 aa).

Interacts with F-actin and ABRA. Highly expressed in skeletal muscle.

The protein localises to the cytoplasm. Functionally, may act as scaffold protein. May stimulate ABRA activity and ABRA-dependent SRF transcriptional activity. The sequence is that of Actin-binding LIM protein 2 (ABLIM2) from Homo sapiens (Human).